The sequence spans 477 residues: MASGPEDPILERYFKGHKAAITSADFSPNCKQIATASWDTFLMLWSLKPHARAYRYVGHKDVVTSLQFSPQGNLLASASRDKTVRLWVLDRKGKSSEFKAHTAPVRSVDFSADGQFLVTASEDKSIKVWSMYRQRFLYSLYRHTHWVRCAKFSPDGRLIVSCSEDKTIKIWDTTSKQCVNNFSDSVGFANFVDFSPNGTCIASAGSDHAVRIWDIRMNRLLQHYQVHSCGVNCLSFHPSGNSLVTASSDGTVKILDLVEGRLIYTLQGHTGPVFTVSFSKDGELFTSGGADAQVLVWRTSFNQVHYRDPSKRNLKRLHLEASPHLLDIYPRTPHGHEDKRETIEINPKLEVMDLHSSSPPVVDVLSFDSTTVTDSTCRAVPGKGEDICRYFLNPLLMPECSSTIMKKKPEDVGDPPSENQRSVPLAVADALEHIMEQLNILTQSVSIVEQRLSLTEDKLKDCLENQQKLFSVIQQKS.

WD repeat units lie at residues 16 to 55 (GHKA…RAYR), 58 to 97 (GHKD…KSSE), 100 to 139 (AHTA…FLYS), 142 to 181 (RHTH…CVNN), 183 to 223 (SDSV…LLQH), 226 to 265 (VHSC…LIYT), and 268 to 307 (GHTG…VHYR). The stretch at 449–469 (EQRLSLTEDKLKDCLENQQKL) forms a coiled coil.

It belongs to the WD repeat POC1 family. As to quaternary structure, interacts with POC1A. Interacts with FAM161A. Interacts with CEP44; the interaction is direct and recruits POC1B to centriolar microtubules. Forms a microtubule-associated complex with POC5, CETN2 and FAM161A. Interacts with CCDC15. In terms of processing, phosphorylated in mitotic cells that may be mediated by CDK1.

It is found in the cytoplasm. The protein resides in the cytoskeleton. Its subcellular location is the microtubule organizing center. The protein localises to the centrosome. It localises to the centriole. It is found in the cilium basal body. The protein resides in the spindle pole. Its function is as follows. Plays an important role in centriole assembly and/or stability and ciliogenesis. Involved in early steps of centriole duplication, as well as in the later steps of centriole length control. Acts in concert with POC1A to ensure centriole integrity and proper mitotic spindle formation. Required for primary cilia formation, ciliary length and also cell proliferation. Required for retinal integrity. Acts as a positive regulator of centriole elongation. This Rattus norvegicus (Rat) protein is POC1 centriolar protein homolog B (Poc1b).